The chain runs to 344 residues: Cell cycle control protein 50C (344 aa).

The Cytoplasmic portion of the chain corresponds to 1–34 (MEETPQHCLSRLPDNSALKQQELPAHRLYFTARR). A helical membrane pass occupies residues 35 to 55 (VLFVFFTTGIFCLCMGIILIL). The Extracellular segment spans residues 56–306 (SARSTQEIEI…STLTWCGGNS (251 aa)). N-linked (GlcNAc...) asparagine glycosylation is found at asparagine 66 and asparagine 261. The helical transmembrane segment at 307–327 (LFLGLAYTVTGAITWLASFTM) threads the bilayer. Over 328 to 344 (MAIHITLKNKQMSFFHQ) the chain is Cytoplasmic.

This sequence belongs to the CDC50/LEM3 family. As to expression, specifically expressed in testis.

It is found in the membrane. The polypeptide is Cell cycle control protein 50C (TMEM30C) (Macaca fascicularis (Crab-eating macaque)).